The chain runs to 273 residues: Type II restriction enzyme HgiCII (273 aa).

Belongs to the TdeIII type II restriction endonuclease family.

It carries out the reaction Endonucleolytic cleavage of DNA to give specific double-stranded fragments with terminal 5'-phosphates.. Its function is as follows. A P subtype restriction enzyme that recognizes the double-stranded sequence 5'-GGWCC-3' and cleaves after G-1. This chain is Type II restriction enzyme HgiCII, found in Herpetosiphon aurantiacus (Herpetosiphon giganteus).